Consider the following 827-residue polypeptide: 4-hydroxy-3-methylbut-2-enyl diphosphate reductase (827 aa).

Residues 1–284 (MEIIRAKHMG…MNIEKKVRGI (284 aa)) form a 4-hydroxy-3-methylbut-2-enyl diphosphate reductase region. Residue C12 participates in [4Fe-4S] cluster binding. H40 and H79 together coordinate (2E)-4-hydroxy-3-methylbut-2-enyl diphosphate. H40 and H79 together coordinate dimethylallyl diphosphate. Isopentenyl diphosphate is bound by residues H40 and H79. Residue C101 coordinates [4Fe-4S] cluster. H129 contacts (2E)-4-hydroxy-3-methylbut-2-enyl diphosphate. H129 contacts dimethylallyl diphosphate. H129 lines the isopentenyl diphosphate pocket. E131 acts as the Proton donor in catalysis. T168 contributes to the (2E)-4-hydroxy-3-methylbut-2-enyl diphosphate binding site. C196 contributes to the [4Fe-4S] cluster binding site. Positions 224, 225, 226, and 268 each coordinate (2E)-4-hydroxy-3-methylbut-2-enyl diphosphate. Residues S224, S225, N226, and S268 each contribute to the dimethylallyl diphosphate site. S224, S225, N226, and S268 together coordinate isopentenyl diphosphate. 4 consecutive S1 motif domains span residues 477-545 (GQIV…LSIK), 562-632 (DDEI…LGIK), 649-716 (DTVI…GSLK), and 733-802 (GTTV…LSIK).

It in the N-terminal section; belongs to the IspH family. Requires [4Fe-4S] cluster as cofactor.

It carries out the reaction isopentenyl diphosphate + 2 oxidized [2Fe-2S]-[ferredoxin] + H2O = (2E)-4-hydroxy-3-methylbut-2-enyl diphosphate + 2 reduced [2Fe-2S]-[ferredoxin] + 2 H(+). It catalyses the reaction dimethylallyl diphosphate + 2 oxidized [2Fe-2S]-[ferredoxin] + H2O = (2E)-4-hydroxy-3-methylbut-2-enyl diphosphate + 2 reduced [2Fe-2S]-[ferredoxin] + 2 H(+). Its pathway is isoprenoid biosynthesis; dimethylallyl diphosphate biosynthesis; dimethylallyl diphosphate from (2E)-4-hydroxy-3-methylbutenyl diphosphate: step 1/1. It functions in the pathway isoprenoid biosynthesis; isopentenyl diphosphate biosynthesis via DXP pathway; isopentenyl diphosphate from 1-deoxy-D-xylulose 5-phosphate: step 6/6. In terms of biological role, catalyzes the conversion of 1-hydroxy-2-methyl-2-(E)-butenyl 4-diphosphate (HMBPP) into a mixture of isopentenyl diphosphate (IPP) and dimethylallyl diphosphate (DMAPP). Acts in the terminal step of the DOXP/MEP pathway for isoprenoid precursor biosynthesis. The protein is 4-hydroxy-3-methylbut-2-enyl diphosphate reductase of Fusobacterium nucleatum subsp. nucleatum (strain ATCC 25586 / DSM 15643 / BCRC 10681 / CIP 101130 / JCM 8532 / KCTC 2640 / LMG 13131 / VPI 4355).